A 374-amino-acid chain; its full sequence is Putative zinc finger MYND domain-containing protein R331 (374 aa).

Cysteine 328, cysteine 331, cysteine 341, cysteine 344, cysteine 350, cysteine 354, histidine 362, and cysteine 366 together coordinate Zn(2+). The segment at 328–366 (CFYCNKNIEKPVVCNKCFRIKYCSEKCQSEYNSYHSDDC) adopts an MYND-type zinc-finger fold.

This chain is Putative zinc finger MYND domain-containing protein R331, found in Acanthamoeba polyphaga (Amoeba).